A 357-amino-acid polypeptide reads, in one-letter code: Cyclin-dependent kinase-like 1 (357 aa).

The Protein kinase domain maps to 4 to 287; sequence YEKIGKIGEG…CEQLLHHPYF (284 aa). ATP-binding positions include 10 to 18 and Lys-33; that span reads IGEGSYGVV. The [NKR]KIAxRE signature appears at 45–51; the sequence is KKIALRE. Asp-126 acts as the Proton acceptor in catalysis.

It belongs to the protein kinase superfamily. CMGC Ser/Thr protein kinase family. CDC2/CDKX subfamily. As to expression, highly expressed in kidney, and to a lower extent in ovary.

The protein localises to the cytoplasm. It is found in the nucleus. The catalysed reaction is L-seryl-[protein] + ATP = O-phospho-L-seryl-[protein] + ADP + H(+). It catalyses the reaction L-threonyl-[protein] + ATP = O-phospho-L-threonyl-[protein] + ADP + H(+). This is Cyclin-dependent kinase-like 1 from Homo sapiens (Human).